Reading from the N-terminus, the 196-residue chain is Charged multivesicular body protein 1a (196 aa).

Positions 5–41 form a coiled coil; it reads LFQLKFTAKQLEKLAKKAEKDSNTEQAKVKKALQQKN. The span at 170–181 shows a compositional bias: polar residues; it reads QGASSVGESSTR. Positions 170–196 are disordered; the sequence is QGASSVGESSTRTQEDQLSRRLASLRN. Positions 185 to 195 match the MIT-interacting motif motif; sequence DQLSRRLASLR.

The protein belongs to the SNF7 family. Probable peripherally associated component of the endosomal sorting required for transport complex III (ESCRT-III).

It localises to the cytoplasm. Its subcellular location is the endosome membrane. Functionally, probable peripherally associated component of the endosomal sorting required for transport complex III (ESCRT-III) which is involved in multivesicular bodies (MVBs) formation and sorting of endosomal cargo proteins into MVBs. MVBs contain intraluminal vesicles (ILVs) that are generated by invagination and scission from the limiting membrane of the endosome and mostly are delivered to lysosomes enabling degradation of membrane proteins, such as stimulated growth factor receptors, lysosomal enzymes and lipids. The sequence is that of Charged multivesicular body protein 1a (chmp1a) from Xenopus laevis (African clawed frog).